The following is a 507-amino-acid chain: Dolichyl pyrophosphate Man9GlcNAc2 alpha-1,3-glucosyltransferase (507 aa).

Residues 1 to 2 (ME) lie on the Cytoplasmic side of the membrane. Residues 3–23 (SWPWMAVVVLLGLTVRWTVSL) form a helical membrane-spanning segment. At 24 to 114 (SSYSGAGKPP…SQAHKLFMRA (91 aa)) the chain is on the lumenal side. The N-linked (GlcNAc...) asparagine glycan is linked to Asn-59. Residues 115–135 (TVLAADLLIYVPAVLLYCYSL) traverse the membrane as a helical segment. Residues 136–143 (KEISPKRK) lie on the Cytoplasmic side of the membrane. The helical transmembrane segment at 144 to 164 (IASALCILLYPGLILIDYGHF) threads the bilayer. At 165-172 (QYNSVSLG) the chain is on the lumenal side. Residues 173-193 (FALWGVLGVSWDWDLLGSLAF) form a helical membrane-spanning segment. Residues 194 to 229 (CLALNYKQMELYHSLPFFCFLLGKCFKKGLKGKGLA) lie on the Cytoplasmic side of the membrane. The chain crosses the membrane as a helical span at residues 230-250 (LFIRIACTVLASFLLCWLPFL). Residues 251–297 (TEREHALQVVRRLFPVDRGLFEDKVANIWCSVNVFLKIKDTLPRHIQ) are Lumenal-facing. A helical transmembrane segment spans residues 298 to 318 (IAISFCFTLLSLLPACIKLTV). The Cytoplasmic portion of the chain corresponds to 319–332 (RPSCKGFRFTLVSC). Residues 333 to 353 (ALSFFLFSFQVHEKSILLVSL) form a helical membrane-spanning segment. At 354 to 361 (PVCLVLTE) the chain is on the lumenal side. Residues 362-382 (IPFMSTWFLLVSTFSMLPLLL) form a helical membrane-spanning segment. Over 383-385 (KDE) the chain is Cytoplasmic. Residues 386-406 (LLLPSVVTVMAFVIACGTFFP) form a helical membrane-spanning segment. Over 407 to 437 (MLENTSEEQLQLKSFAVSVRRHLPGFTFLPR) the chain is Lumenal. Residues 438–458 (IMQCLFLSSVITMVLLTILSV) form a helical membrane-spanning segment. Over 459 to 468 (TLDPPQKLPD) the chain is Cytoplasmic. The helical transmembrane segment at 469–489 (LFPVLICFVSCVNFVFFLVYF) threads the bilayer. Over 490–507 (NIVIMWDSKNGRNRKKIE) the chain is Lumenal.

This sequence belongs to the ALG6/ALG8 glucosyltransferase family.

The protein resides in the endoplasmic reticulum membrane. The catalysed reaction is an alpha-D-Man-(1-&gt;2)-alpha-D-Man-(1-&gt;2)-alpha-D-Man-(1-&gt;3)-[alpha-D-Man-(1-&gt;2)-alpha-D-Man-(1-&gt;3)-[alpha-D-Man-(1-&gt;2)-alpha-D-Man-(1-&gt;6)]-alpha-D-Man-(1-&gt;6)]-beta-D-Man-(1-&gt;4)-beta-D-GlcNAc-(1-&gt;4)-alpha-D-GlcNAc-diphospho-di-trans,poly-cis-dolichol + a di-trans,poly-cis-dolichyl beta-D-glucosyl phosphate = an alpha-D-Glc-(1-&gt;3)-alpha-D-Man-(1-&gt;2)-alpha-D-Man-(1-&gt;2)-alpha-D-Man-(1-&gt;3)-[alpha-D-Man-(1-&gt;2)-alpha-D-Man-(1-&gt;3)-[alpha-D-Man-(1-&gt;2)-alpha-D-Man-(1-&gt;6)]-alpha-D-Man-(1-&gt;6)]-beta-D-Man-(1-&gt;4)-beta-D-GlcNAc-(1-&gt;4)-alpha-D-GlcNAc-diphospho-di-trans,poly-cis-dolichol + a di-trans,poly-cis-dolichyl phosphate + H(+). The protein operates within protein modification; protein glycosylation. Its function is as follows. Dolichyl pyrophosphate Man9GlcNAc2 alpha-1,3-glucosyltransferase that operates in the biosynthetic pathway of dolichol-linked oligosaccharides, the glycan precursors employed in protein asparagine (N)-glycosylation. The assembly of dolichol-linked oligosaccharides begins on the cytosolic side of the endoplasmic reticulum membrane and finishes in its lumen. The sequential addition of sugars to dolichol pyrophosphate produces dolichol-linked oligosaccharides containing fourteen sugars, including two GlcNAcs, nine mannoses and three glucoses. Once assembled, the oligosaccharide is transferred from the lipid to nascent proteins by oligosaccharyltransferases. In the lumen of the endoplasmic reticulum, adds the first glucose residue from dolichyl phosphate glucose (Dol-P-Glc) onto the lipid-linked oligosaccharide intermediate Man(9)GlcNAc(2)-PP-Dol to produce Glc(1)Man(9)GlcNAc(2)-PP-Dol. Glc(1)Man(9)GlcNAc(2)-PP-Dol is a substrate for ALG8, the following enzyme in the biosynthetic pathway. The sequence is that of Dolichyl pyrophosphate Man9GlcNAc2 alpha-1,3-glucosyltransferase from Mus musculus (Mouse).